A 373-amino-acid polypeptide reads, in one-letter code: Probable jasmonic acid carboxyl methyltransferase 1 (373 aa).

An S-adenosyl-L-homocysteine-binding site is contributed by Y18. Q25 provides a ligand contact to jasmonate. C59, N64, D96, L97, S135, and F136 together coordinate S-adenosyl-L-homocysteine. Positions 156 and 157 each coordinate jasmonate. Mg(2+)-binding residues include N174, D260, F262, and N263.

This sequence belongs to the methyltransferase superfamily. Type-7 methyltransferase family. Requires Mg(2+) as cofactor.

The protein localises to the cytoplasm. Its subcellular location is the nucleus. The enzyme catalyses jasmonate + S-adenosyl-L-methionine = methyl (-)-jasmonate + S-adenosyl-L-homocysteine. It functions in the pathway lipid metabolism; oxylipin biosynthesis. Functionally, catalyzes the methylation of jasmonate into methyljasmonate, a plant volatile that acts as an important cellular regulator mediating diverse developmental processes and defense responses. In Theobroma cacao (Cacao), this protein is Probable jasmonic acid carboxyl methyltransferase 1.